The chain runs to 435 residues: MNDMNAKKPALRVAIVGGGISGLALALSLCKHSHLNVQLFEAAPAFGEVGAGVSFGPNAVRAIVGLGLGQAYFQVADRTPQPWEDIWFEWRRGSDASYLGATIAGVGQSSVHRADFLDALVKHLPEGIAQFRKRATQIEQQGDELQVLFRDGTEYRCDLLIGRDGIKSALRSYVLEGQGQDHLEPRFSGTCAYRGMVDSLQLREAYRINGIDEHLVDVPQMYLGLYGHILTFPVRKGRIVNVVAFTSDRSQPEPTWPADAPWVREASQREMLDAFAGWGDARALLECIPAPTLWALHDLPELPGYVHGRVALIGDAAHAMLPHQGAGAGQGLEDAYFLARLLGDSRTETGNLPELLGAYDDLRRPHACRVQRTTVETGELYELRDPIVGADEQLVGEILATRFDWLWNHDLDADVAEARLRMGWEAHEQIALRQG.

12-41 (RVAIVGGGISGLALALSLCKHSHLNVQLFE) is a binding site for FAD.

Requires FAD as cofactor.

It carries out the reaction salicylate + NADH + O2 + 2 H(+) = catechol + CO2 + NAD(+) + H2O. It functions in the pathway aromatic compound metabolism; naphthalene degradation. The chain is Salicylate hydroxylase (nahG) from Pseudomonas putida (Arthrobacter siderocapsulatus).